The sequence spans 569 residues: Isocitrate dehydrogenase kinase/phosphatase (569 aa).

ATP contacts are provided by residues 316–322 and Lys337; that span reads APGVRGM. Residue Asp372 is part of the active site.

The protein belongs to the AceK family.

It is found in the cytoplasm. The catalysed reaction is L-seryl-[isocitrate dehydrogenase] + ATP = O-phospho-L-seryl-[isocitrate dehydrogenase] + ADP + H(+). Its function is as follows. Bifunctional enzyme which can phosphorylate or dephosphorylate isocitrate dehydrogenase (IDH) on a specific serine residue. This is a regulatory mechanism which enables bacteria to bypass the Krebs cycle via the glyoxylate shunt in response to the source of carbon. When bacteria are grown on glucose, IDH is fully active and unphosphorylated, but when grown on acetate or ethanol, the activity of IDH declines drastically concomitant with its phosphorylation. This chain is Isocitrate dehydrogenase kinase/phosphatase, found in Pseudomonas putida (strain W619).